A 132-amino-acid polypeptide reads, in one-letter code: Glycine cleavage system H protein (132 aa).

The region spanning 24 to 106 (RVRVGITDYA…YGAGWLFELE (83 aa)) is the Lipoyl-binding domain. Lysine 65 carries the N6-lipoyllysine modification.

The protein belongs to the GcvH family. As to quaternary structure, the glycine cleavage system is composed of four proteins: P, T, L and H. It depends on (R)-lipoate as a cofactor.

In terms of biological role, the glycine cleavage system catalyzes the degradation of glycine. The H protein shuttles the methylamine group of glycine from the P protein to the T protein. This Nocardia farcinica (strain IFM 10152) protein is Glycine cleavage system H protein.